We begin with the raw amino-acid sequence, 1563 residues long: Superkiller complex protein 3 (1563 aa).

Residue serine 2 is modified to N-acetylserine. 22 TPR repeats span residues 6–39 (VKTA…EKNN), 40–73 (YNAW…EPEQ), 157–196 (YELW…ADNI), 272–305 (GPGL…SPVC), 307–339 (AGWC…IDNF), 386–419 (PGLL…YPDL), 420–453 (AEAH…DAEV), 455–492 (EYHY…DAHM), 493–527 (GKVF…DDND), 564–597 (KWAW…DPKD), 598–631 (CNCW…NPDS), 632–665 (TYSV…KEDY), 633–665 (YSVF…KEDY), 673–713 (GECH…RADV), 790–824 (VQHL…DSNN), 826–860 (LHWN…EQIN), 861–894 (AAAW…DPSY), 980–1013 (ASAF…LHSA), 1020–1053 (NVAV…ELED), 1055–1084 (IGFA…CKSE), 1325–1358 (KWSF…NPDQ), and 1399–1432 (VPAW…ASQQ).

Belongs to the SKI3 family. Component of the SKI complex which consists of SKIC2, SKIC3 and SKIC8. Interacts with PAF1.

Its subcellular location is the cytoplasm. The protein localises to the nucleus. Component of the SKI complex, a multiprotein complex that assists the RNA-degrading exosome during the mRNA decay and quality-control pathways. The SKI complex catalyzes mRNA extraction from 80S ribosomal complexes in the 3'-5' direction and channels mRNA to the cytosolic exosome for degradation. SKI-mediated extraction of mRNA from stalled ribosomes allow binding of the Pelota-HBS1L complex and subsequent ribosome disassembly by ABCE1 for ribosome recycling. In the nucleus, the SKI complex associates with transcriptionally active genes in a manner dependent on PAF1 complex (PAF1C). The sequence is that of Superkiller complex protein 3 from Mus musculus (Mouse).